Reading from the N-terminus, the 234-residue chain is Lactate utilization protein C 1 (234 aa).

This sequence belongs to the LutC/YkgG family.

In terms of biological role, is involved in L-lactate degradation and allows cells to grow with lactate as the sole carbon source. The sequence is that of Lactate utilization protein C 1 from Bacillus mycoides (strain KBAB4) (Bacillus weihenstephanensis).